Reading from the N-terminus, the 327-residue chain is MAWWKAWIEQEGVTVKSSSHFNPDPDAETLYKAMKGIGTNEQAIIDVLTKRSNTQRQQIAKSFKAQFGKDLTETLKSELSGKFERLIVALMYPPYRYEAKELHDAMKSLGTKEGVIIEILASRTKNQLREIMKAYEEDYGSSLEEDIQADTSGYLERILVCLLQGSRDDVSSFVDPGLALQDAHDLYAAGEKIRGTDEMKFITILCTRSATHLLRVFEEYEKIANKSIEDSIKSETHGSLEEAMLTVVKCTQNLHSYFAERLYYAMKGAGTRDGTLIRNIVSRSEIDLNLIKCHFKKMYGKTLSSMIMEDTSGDYKNALLSLVGSDP.

Annexin repeat units follow at residues 21–92 (FNPD…ALMY), 93–164 (PPYR…CLLQ), 177–249 (GLAL…TVVK), and 253–324 (NLHS…SLVG). Ca(2+)-binding residues include M266, G268, G270, and D310.

This sequence belongs to the annexin family.

Its function is as follows. This protein is an anticoagulant protein that acts as an indirect inhibitor of the thromboplastin-specific complex, which is involved in the blood coagulation cascade. This Pan troglodytes (Chimpanzee) protein is Annexin A8 (ANXA8).